Here is a 280-residue protein sequence, read N- to C-terminus: Shikimate dehydrogenase (NADP(+)) (280 aa).

Residues Ser20–Ser22 and Thr67 each bind shikimate. Lys71 acts as the Proton acceptor in catalysis. Glu83 contacts NADP(+). The shikimate site is built by Asn92 and Asp107. Residues Gly131 to Ala135, Asn155 to Lys160, and Leu224 each bind NADP(+). Tyr226 is a shikimate binding site. Gly247 is a binding site for NADP(+).

It belongs to the shikimate dehydrogenase family. As to quaternary structure, homodimer.

It carries out the reaction shikimate + NADP(+) = 3-dehydroshikimate + NADPH + H(+). Its pathway is metabolic intermediate biosynthesis; chorismate biosynthesis; chorismate from D-erythrose 4-phosphate and phosphoenolpyruvate: step 4/7. Its function is as follows. Involved in the biosynthesis of the chorismate, which leads to the biosynthesis of aromatic amino acids. Catalyzes the reversible NADPH linked reduction of 3-dehydroshikimate (DHSA) to yield shikimate (SA). This is Shikimate dehydrogenase (NADP(+)) from Caldanaerobacter subterraneus subsp. tengcongensis (strain DSM 15242 / JCM 11007 / NBRC 100824 / MB4) (Thermoanaerobacter tengcongensis).